A 273-amino-acid polypeptide reads, in one-letter code: Nucleotide-binding protein TT_C1664 (273 aa).

8–15 (GLSGAGKT) contributes to the ATP binding site. GTP is bound at residue 57-60 (DARA).

The protein belongs to the RapZ-like family.

In terms of biological role, displays ATPase and GTPase activities. This Thermus thermophilus (strain ATCC BAA-163 / DSM 7039 / HB27) protein is Nucleotide-binding protein TT_C1664.